The following is a 132-amino-acid chain: Nuclear transition protein 2 (132 aa).

Residues 1-20 show a composition bias toward polar residues; the sequence is MDTKTQSLPNTHAQPHSNSR. The tract at residues 1–132 is disordered; it reads MDTKTQSLPN…KRQSSGRKYN (132 aa). Zn(2+) is bound by residues His-12, His-16, His-24, Cys-29, Cys-31, and Cys-35. The span at 37 to 59 shows a compositional bias: basic residues; it reads SRSRSRSCRSRSSSRRPRSHRSP. Residues 82-94 are compositionally biased toward polar residues; it reads SHQCPSRPVTHSC. A Nuclear localization signal motif is present at residues 105 to 113; the sequence is GKVIKRKQV. Over residues 108–132 the composition is skewed to basic residues; sequence IKRKQVKRSKQVYKRKRQSSGRKYN. The residue at position 127 (Ser-127) is a Phosphoserine.

This sequence belongs to the nuclear transition protein 2 family. Testis.

The protein localises to the nucleus. It localises to the nucleolus. It is found in the chromosome. Plays a key role in the replacement of histones to protamine in the elongating spermatids of mammals. In condensing spermatids, loaded onto the nucleosomes, where it promotes the recruitment and processing of protamines, which are responsible for histone eviction. The sequence is that of Nuclear transition protein 2 (TNP2) from Bos taurus (Bovine).